The following is a 684-amino-acid chain: Hydroxyproline O-galactosyltransferase GALT2 (684 aa).

The Cytoplasmic segment spans residues 1–22 (MKRVKSESFRGVYSSRRFKLSH). The helical; Signal-anchor for type II membrane protein transmembrane segment at 23 to 43 (FLLAIAGFYLVFLAFKFPHFI) threads the bilayer. Topologically, residues 44–684 (EMVAMLSGDT…KGRPQCCNFR (641 aa)) are lumenal. Residues 80–102 (KLEDEDHQSGPSTTQKVSPEEKI) form a disordered region. 3 N-linked (GlcNAc...) asparagine glycosylation sites follow: asparagine 103, asparagine 127, and asparagine 162. A Galectin domain is found at 191–405 (RIMLLPCGLA…DVDIHSIHAT (215 aa)). Residues asparagine 524 and asparagine 632 are each glycosylated (N-linked (GlcNAc...) asparagine).

This sequence belongs to the glycosyltransferase 31 family. Mn(2+) serves as cofactor. In terms of tissue distribution, expressed in stems and at lower levels in cauline leaves and siliques.

It is found in the golgi apparatus membrane. Its pathway is protein modification; protein glycosylation. Its function is as follows. Possesses hydroxyproline O-galactosyltransferase activity. Transfers galactose from UDP-galactose to hydroxyproline residues in the arabinogalactan proteins (AGPs). Is specific for AGPs containing non-contiguous peptidyl hydroxyproline residues. Utilizes UDP-galactose solely as sugar donor. The addition of galactose onto the peptidyl hydroxyproline residues in AGP core proteins represents the first committed step in arabinogalactan polysaccharide addition. AGP glycans play essential roles in both vegetative and reproductive plant growth. The sequence is that of Hydroxyproline O-galactosyltransferase GALT2 from Arabidopsis thaliana (Mouse-ear cress).